Here is a 262-residue protein sequence, read N- to C-terminus: Hydroxyethylthiazole kinase (262 aa).

Met-50 contributes to the substrate binding site. The ATP site is built by Arg-125 and Thr-171. Gly-198 provides a ligand contact to substrate.

This sequence belongs to the Thz kinase family. It depends on Mg(2+) as a cofactor.

The catalysed reaction is 5-(2-hydroxyethyl)-4-methylthiazole + ATP = 4-methyl-5-(2-phosphooxyethyl)-thiazole + ADP + H(+). Its pathway is cofactor biosynthesis; thiamine diphosphate biosynthesis; 4-methyl-5-(2-phosphoethyl)-thiazole from 5-(2-hydroxyethyl)-4-methylthiazole: step 1/1. In terms of biological role, catalyzes the phosphorylation of the hydroxyl group of 4-methyl-5-beta-hydroxyethylthiazole (THZ). The protein is Hydroxyethylthiazole kinase of Escherichia coli O45:K1 (strain S88 / ExPEC).